We begin with the raw amino-acid sequence, 301 residues long: Mycothiol acetyltransferase (301 aa).

2 consecutive N-acetyltransferase domains span residues Val7 to Asp150 and Val152 to Gly301. A 1D-myo-inositol 2-(L-cysteinylamino)-2-deoxy-alpha-D-glucopyranoside-binding site is contributed by Asp39. Acetyl-CoA is bound by residues Leu80–Val82 and Arg88–Ser93. Glu179, Lys220, and Glu228 together coordinate 1D-myo-inositol 2-(L-cysteinylamino)-2-deoxy-alpha-D-glucopyranoside. Residue Val232 to Val234 coordinates acetyl-CoA. Tyr271 contributes to the 1D-myo-inositol 2-(L-cysteinylamino)-2-deoxy-alpha-D-glucopyranoside binding site. Asn276–Lys281 lines the acetyl-CoA pocket.

Belongs to the acetyltransferase family. MshD subfamily. In terms of assembly, monomer.

It carries out the reaction 1D-myo-inositol 2-(L-cysteinylamino)-2-deoxy-alpha-D-glucopyranoside + acetyl-CoA = mycothiol + CoA + H(+). Its function is as follows. Catalyzes the transfer of acetyl from acetyl-CoA to desacetylmycothiol (Cys-GlcN-Ins) to form mycothiol. The protein is Mycothiol acetyltransferase of Mycolicibacterium vanbaalenii (strain DSM 7251 / JCM 13017 / BCRC 16820 / KCTC 9966 / NRRL B-24157 / PYR-1) (Mycobacterium vanbaalenii).